The sequence spans 42 residues: Large ribosomal subunit protein bL36 (42 aa).

Belongs to the bacterial ribosomal protein bL36 family.

The sequence is that of Large ribosomal subunit protein bL36 from Wolbachia sp. subsp. Brugia malayi (strain TRS).